The chain runs to 103 residues: Small ribosomal subunit protein uS14c (103 aa).

The tract at residues 34-56 is disordered; sequence KVSPLSLSEKTKMREKLQSLPRN.

The protein belongs to the universal ribosomal protein uS14 family. In terms of assembly, part of the 30S ribosomal subunit.

The protein localises to the plastid. The protein resides in the chloroplast. In terms of biological role, binds 16S rRNA, required for the assembly of 30S particles. The sequence is that of Small ribosomal subunit protein uS14c from Brachypodium distachyon (Purple false brome).